Consider the following 199-residue polypeptide: Recombination protein RecR (199 aa).

The C4-type zinc finger occupies 56 to 71; that stretch reads CSICFNVSQDDQCRIC. The Toprim domain maps to 79–174; the sequence is SVLCVVEEYK…RVTRLASGLP (96 aa).

It belongs to the RecR family.

May play a role in DNA repair. It seems to be involved in an RecBC-independent recombinational process of DNA repair. It may act with RecF and RecO. The polypeptide is Recombination protein RecR (Nocardioides sp. (strain ATCC BAA-499 / JS614)).